The primary structure comprises 44 residues: Photosystem I reaction center subunit IX (44 aa).

A helical transmembrane segment spans residues 7-27 (YLSVAPVLSTLWFGALAGLLI).

This sequence belongs to the PsaJ family.

The protein localises to the plastid. It localises to the chloroplast thylakoid membrane. May help in the organization of the PsaE and PsaF subunits. The sequence is that of Photosystem I reaction center subunit IX from Oryza nivara (Indian wild rice).